The chain runs to 865 residues: DNA mismatch repair protein MutS (865 aa).

Residue 609–616 (GPNMAGKS) coordinates ATP.

The protein belongs to the DNA mismatch repair MutS family.

In terms of biological role, this protein is involved in the repair of mismatches in DNA. It is possible that it carries out the mismatch recognition step. This protein has a weak ATPase activity. The chain is DNA mismatch repair protein MutS from Leuconostoc citreum (strain KM20).